The primary structure comprises 315 residues: MEIRPLLMCFALCVVYATSKPTEKKDRVHHDAPLSSKEHDDGTNFEYDHDAFLGEEEAKTFDDLTPEESKNRLGKIVEKIDADEDGFVTEAELKAWIKKAQKKYIYDNVERQWKDFDLNNDRMISWEEYKNVTYGTYLDDPEPDDGYNYKQMMARDERRFKMADGNGDHIADKEEFTAFLHPEEYEHMKDIVVLETMEDIDKNGDGFIDLEEYIGDMYNHEDEMDEPEWVATEREQFSEFRDKNKDGKMDREETMDWILPADYDHAEAEAKHLVYESDTNKDGKLTKEEILNKYDLFVGSQATDFGEALVRHDEF.

A signal peptide spans 1–19; sequence MEIRPLLMCFALCVVYATS. EF-hand domains follow at residues 68–103, 104–139, 151–186, 188–223, 229–264, and 265–300; these read ESKN…AQKK, YIYD…TYLD, QMMA…EEYE, MKDI…HEDE, WVAT…ADYD, and HAEA…FVGS. Ca(2+) is bound by residues Asp-81, Asp-83, Asp-85, Glu-92, Asp-117, Asn-119, Asp-121, Met-123, and Glu-128. An N-linked (GlcNAc...) asparagine glycan is attached at Asn-131. Residues Asp-164, Asn-166, Asp-168, Glu-175, Asp-201, Asn-203, Asp-205, Glu-212, Asp-242, Asn-244, Asp-246, Lys-248, Glu-253, Asp-278, Asn-280, Asp-282, Lys-284, and Glu-289 each contribute to the Ca(2+) site. The short motif at 312–315 is the Prevents secretion from ER element; sequence HDEF.

This sequence belongs to the CREC family. In terms of assembly, interacts with ggcx.

It is found in the endoplasmic reticulum membrane. It localises to the golgi apparatus. The protein resides in the secreted. Its subcellular location is the melanosome. The protein localises to the sarcoplasmic reticulum lumen. Functionally, involved in regulation of vitamin K-dependent carboxylation of multiple N-terminal glutamate residues. Seems to inhibit gamma-carboxylase ggcx. Binds 7 calcium ions with a low affinity. The chain is Calumenin-A (calua) from Danio rerio (Zebrafish).